A 110-amino-acid chain; its full sequence is U1-lycotoxin-Ls1gg (110 aa).

The signal sequence occupies residues 1–20 (MKFVLLFGVLLVTLFSYSSA). A propeptide spanning residues 21 to 44 (EMLDDFDQADEDELLSLIEKEEAR) is cleaved from the precursor. 3 disulfide bridges follow: Cys-54–Cys-71, Cys-61–Cys-89, and Cys-73–Cys-87.

The protein belongs to the neurotoxin 19 (CSTX) family. 03 subfamily. As to expression, expressed by the venom gland.

The protein resides in the secreted. The chain is U1-lycotoxin-Ls1gg from Lycosa singoriensis (Wolf spider).